We begin with the raw amino-acid sequence, 287 residues long: Probable glucose uptake protein GlcU (287 aa).

A run of 9 helical transmembrane segments spans residues 7-29, 34-56, 58-75, 114-136, 156-178, 183-202, 209-228, 233-255, and 267-286; these read LIAL…VGGG, IRGT…FAKF, NPTV…WAFG, WSSM…GVAL, MGIL…IFGV, ALFF…SMNH, TALN…FMFY, VGVA…GGIF, and TGIW…LGNL.

Belongs to the GRP transporter (TC 2.A.7.5) family.

Its subcellular location is the cell membrane. Functionally, involved in the uptake of glucose. This Staphylococcus aureus (strain COL) protein is Probable glucose uptake protein GlcU (glcU).